The primary structure comprises 748 residues: Elongation factor G, mitochondrial (748 aa).

The N-terminal 14 residues, 1 to 14, are a transit peptide targeting the mitochondrion; sequence MTISSFLRVRHSLA. Residues 40–318 form the tr-type G domain; it reads ERIRNIGISA…VLNYLPHPGE (279 aa). GTP-binding positions include 49 to 56, 116 to 120, and 170 to 173; these read AHIDSGKT, DTPGH, and NKLD.

Belongs to the TRAFAC class translation factor GTPase superfamily. Classic translation factor GTPase family. EF-G/EF-2 subfamily.

The protein localises to the mitochondrion. Its pathway is protein biosynthesis; polypeptide chain elongation. Its function is as follows. Mitochondrial GTPase that catalyzes the GTP-dependent ribosomal translocation step during translation elongation. During this step, the ribosome changes from the pre-translocational (PRE) to the post-translocational (POST) state as the newly formed A-site-bound peptidyl-tRNA and P-site-bound deacylated tRNA move to the P and E sites, respectively. Catalyzes the coordinated movement of the two tRNA molecules, the mRNA and conformational changes in the ribosome. This is Elongation factor G, mitochondrial from Aedes aegypti (Yellowfever mosquito).